The following is a 354-amino-acid chain: Selection and upkeep of intraepithelial T-cells protein 10 (354 aa).

A signal peptide spans 1-52 (MFLRTQMEQSQADIFALIKPHFGVMESSASYLPGFFMTFLLLQTTVLTQAMS). The Ig-like V-type domain maps to 53–141 (LDIQINIQVP…TNREKKRSVV (89 aa)). Topologically, residues 53 to 158 (LDIQINIQVP…SEYMSLMSNK (106 aa)) are extracellular. A disulfide bond links Cys-71 and Cys-125. N-linked (GlcNAc...) asparagine glycosylation occurs at Asn-129. Residues 159–179 (FSCPLTYLFIIIFLNCLKGML) form a helical membrane-spanning segment. The Cytoplasmic portion of the chain corresponds to 180-209 (DFCCLKGKPVYFRELINKIKEVLNIKMRAC). A helical transmembrane segment spans residues 210-230 (CTLIWEFLLIVLYIAFLPFYL). Topologically, residues 231–252 (KFRSRASILDDAYPLHSNWLWD) are extracellular. The helical transmembrane segment at 253–273 (ICIVLSVLMIFFTGLSLFLLW) threads the bilayer. Over 274–354 (TLNCYGQMSY…RLDCSLNWKT (81 aa)) the chain is Cytoplasmic.

Belongs to the SKINT family. Expressed in skin and thymus.

It is found in the membrane. In terms of biological role, may act by engaging a cell surface molecule on immature T-cells in the embryonic thymus. In Mus musculus (Mouse), this protein is Selection and upkeep of intraepithelial T-cells protein 10 (Skint10).